Consider the following 278-residue polypeptide: Transcriptional regulator ICP22 homolog (278 aa).

2 disordered regions span residues 1-42 and 154-229; these read MFCT…RDTS and CDVS…KRPQ. Positions 1-142 are IE62-binding; the sequence is MFCTSPATRG…PRGEDGFIEA (142 aa). Composition is skewed to acidic residues over residues 155–169 and 183–205; these read DVSD…DDDG and AESS…DSCE.

It belongs to the herpesviridae ICP22 family. Interacts with IE62; this interaction modulates the function of IE62. Interacts with several components of host pre-initiation complex including GTF2E1, GTF2H2 and POLR2A; these interactions lead to repression of gene transcription. Interacts with host ASF1A; altering its ability to bind histones. Post-translationally, phosphorylated in vitro by host and by protein kinase ORF47.

The protein localises to the host cytoplasm. It is found in the host nucleus. Its subcellular location is the virion tegument. Its function is as follows. Immediate early (EI) protein that functions as a transcriptional regulator of cellular and viral mRNAs mainly by interacting with several general transcription factors thereby disorganizing the preinitiation complex at certain promoters. May additionally help to regulate levels of histones in virus-infected cells by interacting with host ASF1. By inhibiting host transcriptional program, IE63 plays a major role in the ability of VZV to overcome the innate immune response to the virus. This Varicella-zoster virus (strain Dumas) (HHV-3) protein is Transcriptional regulator ICP22 homolog.